A 376-amino-acid chain; its full sequence is Erythronate-4-phosphate dehydrogenase (376 aa).

The substrate site is built by Ser-45 and Thr-67. Residue Asp-147 coordinates NAD(+). Arg-209 is an active-site residue. Asp-233 lines the NAD(+) pocket. The active site involves Glu-238. The active-site Proton donor is the His-255. Gly-258 lines the NAD(+) pocket. Position 259 (Tyr-259) interacts with substrate.

Belongs to the D-isomer specific 2-hydroxyacid dehydrogenase family. PdxB subfamily. In terms of assembly, homodimer.

The protein localises to the cytoplasm. The catalysed reaction is 4-phospho-D-erythronate + NAD(+) = (R)-3-hydroxy-2-oxo-4-phosphooxybutanoate + NADH + H(+). It participates in cofactor biosynthesis; pyridoxine 5'-phosphate biosynthesis; pyridoxine 5'-phosphate from D-erythrose 4-phosphate: step 2/5. Catalyzes the oxidation of erythronate-4-phosphate to 3-hydroxy-2-oxo-4-phosphonooxybutanoate. The chain is Erythronate-4-phosphate dehydrogenase from Shewanella sp. (strain MR-7).